A 108-amino-acid polypeptide reads, in one-letter code: Resistin (108 aa).

An N-terminal signal peptide occupies residues 1–18; that stretch reads MKALCLLLLPVLGLLVSS. 5 disulfides stabilise this stretch: Cys-51/Cys-104, Cys-63/Cys-103, Cys-72/Cys-89, Cys-74/Cys-91, and Cys-78/Cys-93.

This sequence belongs to the resistin/FIZZ family. As to quaternary structure, homodimer; disulfide-linked. Interacts with DEFA1. Expressed in white adipose tissue (at protein level). Widely expressed, with particularly strong expression in lung, bone marrow, breast and peripheral blood. Expressed strongly in bone marrow and at lower levels in lung, but not detected in other tissues. Isoform 2 is detected in adipose tissue, bone marrow, brain, lung, peripheral blood, placenta and thymus.

It is found in the secreted. Functionally, hormone that seems to suppress insulin ability to stimulate glucose uptake into adipose cells. Potentially links obesity to diabetes. Promotes chemotaxis in myeloid cells. The polypeptide is Resistin (RETN) (Homo sapiens (Human)).